The primary structure comprises 895 residues: Probable LRR receptor-like serine/threonine-protein kinase At5g48740 (895 aa).

Residues 1 to 16 (MLFWVLLSSFCVFCFS) form the signal peptide. Over 17 to 544 (SPDGFLSLSC…INKKQRKQNR (528 aa)) the chain is Extracellular. 7 N-linked (GlcNAc...) asparagine glycosylation sites follow: Asn36, Asn50, Asn60, Asn140, Asn195, Asn234, and Asn318. LRR repeat units follow at residues 385-407 (RVTS…GDLL), 408-430 (DLKT…GSLK), 431-453 (DLQK…EDLV), 454-477 (NLEV…GKLK), 478-500 (KLRL…LNIT), and 511-532 (CLSF…PQVT). 5 N-linked (GlcNAc...) asparagine glycosylation sites follow: Asn416, Asn436, Asn462, Asn498, and Asn521. The helical transmembrane segment at 545 to 565 (IAILLGVSGGALFATFLVFVF) threads the bilayer. Residues 566-895 (MSIFTRRQRN…SYLAASAHTD (330 aa)) are Cytoplasmic-facing. In terms of domain architecture, Protein kinase spans 606-888 (RNFKEVIGRG…EAYSLQLSYL (283 aa)). Residues 612–620 (IGRGSFGAV) and Lys634 contribute to the ATP site. A Phosphotyrosine modification is found at Tyr679. The Proton acceptor role is filled by Asp732. Ser736 carries the phosphoserine modification. Phosphothreonine is present on residues Thr767 and Thr772. Tyr780 carries the phosphotyrosine modification.

Belongs to the protein kinase superfamily. Ser/Thr protein kinase family.

It localises to the membrane. It carries out the reaction L-seryl-[protein] + ATP = O-phospho-L-seryl-[protein] + ADP + H(+). It catalyses the reaction L-threonyl-[protein] + ATP = O-phospho-L-threonyl-[protein] + ADP + H(+). The sequence is that of Probable LRR receptor-like serine/threonine-protein kinase At5g48740 from Arabidopsis thaliana (Mouse-ear cress).